The chain runs to 33 residues: Beta-amanitin proprotein (33 aa).

A propeptide spanning residues 1 to 10 (MSDINATRLP) is cleaved from the precursor. The segment at residues 11-18 (IWGIGCDP) is a cross-link (cyclopeptide (Ile-Pro)). Residues 12–16 (WGIGC) constitute a cross-link (2'-cysteinyl-6'-hydroxytryptophan sulfoxide (Trp-Cys)). The propeptide occupies 19-33 (CVGDEVTALLTRGEA).

This sequence belongs to the MSDIN fungal toxin family. Post-translationally, processed by the macrocyclase-peptidase enzyme POPB to yield a toxic cyclic decapeptide. POPB first removes 10 residues from the N-terminus. Conformational trapping of the remaining peptide forces the enzyme to release this intermediate rather than proceed to macrocyclization. The enzyme rebinds the remaining peptide in a different conformation and catalyzes macrocyclization of the N-terminal 8 residues.

Its function is as follows. Toxin belonging to the bicyclic octapeptides amatoxins that acts by binding non-competitively to RNA polymerase II and greatly slowing the elongation of transcripts from target promoters. This is Beta-amanitin proprotein from Amanita fuligineoides.